A 294-amino-acid chain; its full sequence is Phosphoprotein (294 aa).

Residues 12–28 (MGNEAAKAAEAFQRSLK) are binding to monomeric RNA-free nucleoprotein. The interval 52 to 97 (KPTISKSTKVTTPPERRNAWGEKPDTTRNQTEEARNEATLEDTSRL) is disordered. The span at 65–97 (PERRNAWGEKPDTTRNQTEEARNEATLEDTSRL) shows a compositional bias: basic and acidic residues. A Phosphoserine modification is found at serine 106. The segment at 123–128 (KKKVTF) is binding to host phosphatase PP1. The segment at 135–157 (RYTKLEMEALELLSDNEDDDAES) is binding to protein M2-1. 5 positions are modified to phosphoserine: serine 148, serine 157, serine 158, serine 168, and serine 171. The tract at residues 169-194 (ALSLEARLESIDEKLSMILGLLRTLN) is oligomerization and binding to RNA-directed RNA polymerase L. Positions 234–294 (MKEEAKQKSK…PDDDLYSLTM (61 aa)) are disordered. Positions 251-279 (LTEKAKELNKIVEDESTSGESEEEEEEED) are binding to RNA-directed RNA polymerase L. Positions 253-263 (EKAKELNKIVE) are enriched in basic and acidic residues. The span at 264 to 294 (DESTSGESEEEEEEEDEEESNPDDDLYSLTM) shows a compositional bias: acidic residues. Positions 281 to 294 (EESNPDDDLYSLTM) are binding to the N-RNA complex.

The protein belongs to the pneumoviridae phosphoprotein P family. In terms of assembly, homotetramer. Interacts with protein M2-1; the interaction between the two tetramers is required for the anti-termination and elongation transcriptional activities of protein M2-1. Interacts with host phosphatase PP1; this interaction recruits PP1 to the inclusion bodies. Formation of a complex PP1/M2-1/P allows P to target host PP1 phosphatase to the M2-1 substrate. Interacts with the nucleoprotein N; the phosphorylated phosphoprotein P binds to N-RNA complex. Interacts with the monomeric RNA-free nucleoprotein N. Interacts with RNA-directed RNA polymerase L (via N-terminus); the association of P and L forms the polymerase complex. Constitutively phosphorylated by host.

It localises to the virion. It is found in the host cytoplasm. Plays critical roles in regulating RNA replication and transcription through its interactions with multiple proteins. Tethers the RNA-directed RNA polymerase L to the nucleoprotein-RNA complex. Recruits the M2-1 protein, a processivity factor that is required for efficient transcription of viral RNA. Acts as a chaperone for neo-synthesized nucleoprotein by forming an N-P complex that preserves N in a monomeric and RNA-free state and prevents the association of nascent N with host cell RNAs. Recruits the host phosphatase PP1 to inclusion bodies to regulate viral transcription. The protein is Phosphoprotein of Avian metapneumovirus (isolate Canada goose/Minnesota/15a/2001) (AMPV).